Reading from the N-terminus, the 422-residue chain is Metallocarboxypeptidase A (422 aa).

Residues 1 to 17 form the signal peptide; sequence MRSVLSLALLAANVVTA. Positions 18 to 112 are cleaved as a propeptide — activation peptide; it reads AVVSPFDYSG…FEAYSAGYAP (95 aa). Positions 119–419 constitute a Peptidase M14 domain; that stretch reads SYHSYQDHLS…AGTVAMLKAV (301 aa). 2 residues coordinate Zn(2+): His179 and Glu182. Residues 179 to 182, Arg237, and 254 to 255 contribute to the substrate site; these read HARE and NR. Cys248 and Cys271 are oxidised to a cystine. His309 contributes to the Zn(2+) binding site. 310–311 contacts substrate; the sequence is SY. Residue Glu385 is the Proton donor/acceptor of the active site.

Belongs to the peptidase M14 family. Requires Zn(2+) as cofactor.

Its subcellular location is the secreted. In terms of biological role, extracellular metalloprotease that contributes to pathogenicity. This is Metallocarboxypeptidase A (MCPA) from Trichophyton rubrum (Athlete's foot fungus).